The sequence spans 303 residues: MAPRSVLETIQSVLQKNMVREFLAEFLSTYVMMVFGLGSVAHMVLGENSGSYLGVNLGFGFGVTMGVHVAGGISGAHMNAAVTFTNCALGRMTWKKFPVYVLGQFLGSFSAAATTYLIFYGAINHFAGGDLLVTGSKATANIFATYLPEYMTLWRGFLDEAFVTGMLQLCLFAITDKKNSPALQGTEPLVIGILVTVLGVSLGMNSGYAINPSRDLPPRLFTFIAGWGKQVFRAGNNWWWVPVVAPLLGAYLGGIVYLGLIHPSIPQDPQRLENFTARDQKVTASYKNAASANISGSVPLEHF.

Topologically, residues 1–21 (MAPRSVLETIQSVLQKNMVRE) are cytoplasmic. The residue at position 5 (Ser-5) is a Phosphoserine. A helical membrane pass occupies residues 22–39 (FLAEFLSTYVMMVFGLGS). Topologically, residues 40-52 (VAHMVLGENSGSY) are extracellular. A helical transmembrane segment spans residues 53–70 (LGVNLGFGFGVTMGVHVA). At 71–74 (GGIS) the chain is on the cytoplasmic side. Positions 75–88 (GAHMNAAVTFTNCA) form an intramembrane region, discontinuously helical. The short motif at 79–81 (NAA) is the NPA 1 element. Topologically, residues 89–96 (LGRMTWKK) are cytoplasmic. A helical transmembrane segment spans residues 97 to 117 (FPVYVLGQFLGSFSAAATTYL). Residues 118–152 (IFYGAINHFAGGDLLVTGSKATANIFATYLPEYMT) are Extracellular-facing. The chain crosses the membrane as a helical span at residues 153–173 (LWRGFLDEAFVTGMLQLCLFA). At 174 to 185 (ITDKKNSPALQG) the chain is on the cytoplasmic side. A helical membrane pass occupies residues 186–202 (TEPLVIGILVTVLGVSL). Residues 203-206 (GMNS) lie on the Extracellular side of the membrane. Positions 207-220 (GYAINPSRDLPPRL) form an intramembrane region, discontinuously helical. The NPA 2 motif lies at 211-213 (NPS). The Extracellular portion of the chain corresponds to 221 to 238 (FTFIAGWGKQVFRAGNNW). A helical membrane pass occupies residues 239 to 260 (WWVPVVAPLLGAYLGGIVYLGL). Over 261-303 (IHPSIPQDPQRLENFTARDQKVTASYKNAASANISGSVPLEHF) the chain is Cytoplasmic.

This sequence belongs to the MIP/aquaporin (TC 1.A.8) family. As to quaternary structure, homotetramer; each monomer provides an independent glycerol/water pore. Two homotetramers on opposing membranes can dimerize, forming a cell-cell junction. Interacts with PLIN1. In terms of processing, phosphorylation by PKA could prevent the interaction with PLIN1. As to expression, detected in proximal tubules in kidney. Detected in the capillary network between muscle fibers in skeletal muscle and heart, and in spermatids and on spermatozoa tails in testis and epididymis. Detected in white and brown adipose tissue, especially on small blood vessels (at protein level). Detected in kidney and white adipose tissue.

The protein resides in the cell membrane. The protein localises to the cytoplasmic vesicle membrane. Its subcellular location is the lipid droplet. It carries out the reaction glycerol(in) = glycerol(out). The enzyme catalyses H2O(in) = H2O(out). It catalyses the reaction urea(in) = urea(out). Its activity is regulated as follows. Glycerol transport is regulated by pH, with the porin being permeable to glycerol at pH 7.4 but not at pH 5.5. Water permeability, however, is not influenced by pH. Its function is as follows. Aquaglyceroporins form homotetrameric transmembrane channels, with each monomer independently mediating glycerol and water transport across the plasma membrane along their osmotic gradient. Could also be permeable to urea. Mediates the efflux of glycerol, formed upon triglyceride hydrolysis, to avoid its accumulation in adipocytes and to make it available to other tissues. In the kidney, mediates the reabsorption of glycerol, preventing its loss in urine, again participating to energy homeostasis. In pancreatic beta cells, it also mediates the efflux of glycerol, regulating its intracellular levels. The protein is Aquaporin-7 of Mus musculus (Mouse).